The primary structure comprises 119 residues: Holo-[acyl-carrier-protein] synthase (119 aa).

Mg(2+) contacts are provided by aspartate 8 and glutamate 59.

The protein belongs to the P-Pant transferase superfamily. AcpS family. Mg(2+) serves as cofactor.

It is found in the cytoplasm. It carries out the reaction apo-[ACP] + CoA = holo-[ACP] + adenosine 3',5'-bisphosphate + H(+). Its function is as follows. Transfers the 4'-phosphopantetheine moiety from coenzyme A to a Ser of acyl-carrier-protein. This chain is Holo-[acyl-carrier-protein] synthase, found in Lactococcus lactis subsp. cremoris (strain SK11).